The following is a 328-amino-acid chain: DNA-directed RNA polymerase subunit alpha (328 aa).

Positions 1–232 (MSTQGFLKPR…DQISVFAALE (232 aa)) are alpha N-terminal domain (alpha-NTD). The alpha C-terminal domain (alpha-CTD) stretch occupies residues 248-328 (IDPVLLRPVD…NWPPLGLERP (81 aa)).

This sequence belongs to the RNA polymerase alpha chain family. Homodimer. The RNAP catalytic core consists of 2 alpha, 1 beta, 1 beta' and 1 omega subunit. When a sigma factor is associated with the core the holoenzyme is formed, which can initiate transcription.

It catalyses the reaction RNA(n) + a ribonucleoside 5'-triphosphate = RNA(n+1) + diphosphate. In terms of biological role, DNA-dependent RNA polymerase catalyzes the transcription of DNA into RNA using the four ribonucleoside triphosphates as substrates. This is DNA-directed RNA polymerase subunit alpha from Bordetella petrii (strain ATCC BAA-461 / DSM 12804 / CCUG 43448).